Reading from the N-terminus, the 160-residue chain is Cyclic pyranopterin monophosphate synthase (160 aa).

Substrate is bound by residues 74–76 and 112–113; these read LSH and ME. Residue D127 is part of the active site.

The protein belongs to the MoaC family. Homohexamer; trimer of dimers.

The catalysed reaction is (8S)-3',8-cyclo-7,8-dihydroguanosine 5'-triphosphate = cyclic pyranopterin phosphate + diphosphate. Its pathway is cofactor biosynthesis; molybdopterin biosynthesis. Catalyzes the conversion of (8S)-3',8-cyclo-7,8-dihydroguanosine 5'-triphosphate to cyclic pyranopterin monophosphate (cPMP). This is Cyclic pyranopterin monophosphate synthase from Pelobacter propionicus (strain DSM 2379 / NBRC 103807 / OttBd1).